Here is a 487-residue protein sequence, read N- to C-terminus: Acetyl-coenzyme A carboxylase carboxyl transferase subunit beta, chloroplastic (487 aa).

A CoA carboxyltransferase N-terminal domain is found at 223 to 487 (LWVQCENCYG…LHAFFPLNQN (265 aa)). 4 residues coordinate Zn(2+): Cys-227, Cys-230, Cys-246, and Cys-249. Residues 227–249 (CENCYGLNYKKSFKSKMNLCEQC) form a C4-type zinc finger.

This sequence belongs to the AccD/PCCB family. As to quaternary structure, acetyl-CoA carboxylase is a heterohexamer composed of biotin carboxyl carrier protein, biotin carboxylase and 2 subunits each of ACCase subunit alpha and ACCase plastid-coded subunit beta (accD). Zn(2+) is required as a cofactor.

The protein resides in the plastid. It is found in the chloroplast stroma. The enzyme catalyses N(6)-carboxybiotinyl-L-lysyl-[protein] + acetyl-CoA = N(6)-biotinyl-L-lysyl-[protein] + malonyl-CoA. It participates in lipid metabolism; malonyl-CoA biosynthesis; malonyl-CoA from acetyl-CoA: step 1/1. In terms of biological role, component of the acetyl coenzyme A carboxylase (ACC) complex. Biotin carboxylase (BC) catalyzes the carboxylation of biotin on its carrier protein (BCCP) and then the CO(2) group is transferred by the transcarboxylase to acetyl-CoA to form malonyl-CoA. The chain is Acetyl-coenzyme A carboxylase carboxyl transferase subunit beta, chloroplastic from Panax ginseng (Korean ginseng).